Consider the following 494-residue polypeptide: Lysine--tRNA ligase (494 aa).

Residues glutamate 407 and glutamate 414 each contribute to the Mg(2+) site.

Belongs to the class-II aminoacyl-tRNA synthetase family. In terms of assembly, homodimer. It depends on Mg(2+) as a cofactor.

Its subcellular location is the cytoplasm. It catalyses the reaction tRNA(Lys) + L-lysine + ATP = L-lysyl-tRNA(Lys) + AMP + diphosphate. This is Lysine--tRNA ligase from Lactococcus lactis subsp. cremoris (strain MG1363).